Consider the following 368-residue polypeptide: UDP-galactose/UDP-N-acetylglucosamine transporter srf-3 (368 aa).

8 consecutive transmembrane segments (helical) span residues Phe-72 to Leu-92, Leu-118 to Ala-138, Thr-145 to Leu-165, Trp-174 to Ala-194, Phe-203 to Phe-223, Leu-235 to Ile-254, Ser-273 to Ile-293, and Ile-317 to Phe-337.

Belongs to the nucleotide-sugar transporter family. SLC35A subfamily. Expressed exclusively in pharyngeal cells g1 and g2, lateral seam cells, spermatheca and vas deferens.

The protein localises to the golgi apparatus membrane. Its function is as follows. Acts as a transporter of both UDP-galactose and UDP-N-acetylglucosamine into the Golgi lumen. Apparently transports UDP-galactose and UDP-N-acetylglucosamine simultaneously, and independently, by an unknown mechanism. Functions redundantly with nucleotide sugar transporter nstp-4. May be involved in gonadal development. The polypeptide is UDP-galactose/UDP-N-acetylglucosamine transporter srf-3 (srf-3) (Caenorhabditis elegans).